A 228-amino-acid chain; its full sequence is Translin (228 aa).

A DNA/RNA binding region spans residues 86 to 90; the sequence is RFHEH. Residues 177–198 form a leucine-zipper region; that stretch reads LDSGFRLLNLKNDSLRKRYDGL. Lys-187 bears the N6-acetyllysine mark. Ser-190 bears the Phosphoserine mark. Lys-199 bears the N6-acetyllysine mark.

This sequence belongs to the translin family. Ring-shaped heterooctamer of six TSN and two TSNAX subunits, DNA/RNA binding occurs inside the ring.

The protein resides in the cytoplasm. It is found in the nucleus. Its function is as follows. DNA-binding protein that specifically recognizes consensus sequences at the breakpoint junctions in chromosomal translocations, mostly involving immunoglobulin (Ig)/T-cell receptor gene segments. Seems to recognize single-stranded DNA ends generated by staggered breaks occurring at recombination hot spots. Exhibits both single-stranded and double-stranded endoribonuclease activity. May act as an activator of RNA-induced silencing complex (RISC) by facilitating endonucleolytic cleavage of the siRNA passenger strand. The protein is Translin (TSN) of Pongo abelii (Sumatran orangutan).